A 71-amino-acid polypeptide reads, in one-letter code: Protein DP71L (71 aa).

Important for host CHOP inhibition stretches follow at residues 16 to 18 (VRF) and 57 to 61 (LSTVL).

This sequence belongs to the asfivirus DP71L family. In terms of assembly, interacts (via C-terminus) with host PPP1CB.

Its function is as follows. Interacts with the host phosphatase PP1 catalytic subunit (PPP1CB) and recruits it to dephosphorylate EIF2S1/eIF2alpha and therefore restores the host translation that has been shut-down by the host. Also inhibits the EIF2S1/eIF2alpha-ATF4-DDIT3/CHOP pathway. The polypeptide is Protein DP71L (African swine fever virus (strain Badajoz 1971 Vero-adapted) (Ba71V)).